Consider the following 178-residue polypeptide: RNA pyrophosphohydrolase (178 aa).

A Nudix hydrolase domain is found at 18–171 (PYRPCVGLMV…KRKVYEQVVA (154 aa)). The short motif at 59–80 (GGIDKGEDPAQAALRELYEETG) is the Nudix box element.

The protein belongs to the Nudix hydrolase family. RppH subfamily. A divalent metal cation is required as a cofactor.

Functionally, accelerates the degradation of transcripts by removing pyrophosphate from the 5'-end of triphosphorylated RNA, leading to a more labile monophosphorylated state that can stimulate subsequent ribonuclease cleavage. The sequence is that of RNA pyrophosphohydrolase from Brucella canis (strain ATCC 23365 / NCTC 10854 / RM-666).